Reading from the N-terminus, the 65-residue chain is Conotoxin tx3c (65 aa).

The signal sequence occupies residues M1–A19. A propeptide spanning residues V20–A50 is cleaved from the precursor. Intrachain disulfides connect C53/C64, C54/C60, and C57/C63. P62 carries the 4-hydroxyproline; partial modification. At C64 the chain carries Cysteine amide.

The hydroxylation at Pro-62 is observed in PubMed:15924437, PubMed:19380747 and PubMed:22709442, and the non-hydroxylation is described in PubMed:22709442. As to expression, expressed by the venom duct.

The protein resides in the secreted. Functionally, causes scratching in mice. This chain is Conotoxin tx3c, found in Conus textile (Cloth-of-gold cone).